Consider the following 415-residue polypeptide: Serine hydroxymethyltransferase (415 aa).

Residues Leu117 and 121–123 (GHL) contribute to the (6S)-5,6,7,8-tetrahydrofolate site. An N6-(pyridoxal phosphate)lysine modification is found at Lys226. Glu241 contributes to the (6S)-5,6,7,8-tetrahydrofolate binding site.

This sequence belongs to the SHMT family. As to quaternary structure, homodimer. Requires pyridoxal 5'-phosphate as cofactor.

The protein localises to the cytoplasm. The catalysed reaction is (6R)-5,10-methylene-5,6,7,8-tetrahydrofolate + glycine + H2O = (6S)-5,6,7,8-tetrahydrofolate + L-serine. Its pathway is one-carbon metabolism; tetrahydrofolate interconversion. The protein operates within amino-acid biosynthesis; glycine biosynthesis; glycine from L-serine: step 1/1. Its function is as follows. Catalyzes the reversible interconversion of serine and glycine with tetrahydrofolate (THF) serving as the one-carbon carrier. This reaction serves as the major source of one-carbon groups required for the biosynthesis of purines, thymidylate, methionine, and other important biomolecules. Also exhibits THF-independent aldolase activity toward beta-hydroxyamino acids, producing glycine and aldehydes, via a retro-aldol mechanism. In Bacillus subtilis (strain 168), this protein is Serine hydroxymethyltransferase.